A 303-amino-acid chain; its full sequence is MIIDVNIPIPFRLDKYLKRLYPLLTQGVIEKALRQKQITVNFQKAEANLRVKVGDTIFINDYFNLPVTQHETLVFADAEIKLAKKILTDYLIYEDDHLIAINKPASLATQGGSKINLSIDSALKYLNYQGADFKLVHRLDKETSGLLLIAKNYLSSVKLHNAFKEKLVIKKYFAITYGRPVKNVGTVKSNIGKSKRRLSKIANIDSDDGKLAITYYKLLKSLNNNLFLIEFMPVTGRMHQLRLHAQLLGCPILGDDKYGNKEIMPYSKYMFLHANNIYLSETIVGKEIKLEAKLPFYFTRRII.

The region spanning 11 to 87 (FRLDKYLKRL…AEIKLAKKIL (77 aa)) is the S4 RNA-binding domain. Asp-140 is a catalytic residue.

It belongs to the pseudouridine synthase RluA family.

It catalyses the reaction uridine(955/2504/2580) in 23S rRNA = pseudouridine(955/2504/2580) in 23S rRNA. Responsible for synthesis of pseudouridine from uracil at positions 955, 2504 and 2580 in 23S ribosomal RNA. The sequence is that of Ribosomal large subunit pseudouridine synthase C (rluC) from Rickettsia prowazekii (strain Madrid E).